Here is a 1285-residue protein sequence, read N- to C-terminus: MSGPLEGADGGGDPRPGESFCSGGVPSPGAPQHRSCPGPSLADDTDANSNGSSGNESNGHESRGASQRSSHSSSSGNGKDSALLETTESSKSTNSQSPSPPSSSIAYSLLSASSEQDNPSTSGCSSEQSARARTQKELMTALRELKLRLPPGHRGKGRSGTLATLQYALACVKQVQANQEYYQQWSLEEGEPCAMDMSTYTLEELEHITSEYTLRNQDTFSVAVSFLTGRIVYISEQAGVLLRCKRDVFRGARFSELLAPQDVGVFYGSTAPFRLPTWGTGTSAGSGLKDFTQEKSVFCRIRGGPDRDPGPRYHPFRLTPYVTKIRVSDGAPAQPCCLLIAERIHSGYEAPRIPPDKRIFTTRHTPSCLFQDVDERAAPLLGYLPQDLLGAPVLLFLHPEDRPLMLAIHKKILQLAGQPFDHSPIRFCARNGEYVTMDTSWAGFVHPWSRKVAFVLGRHKVRTAPLNEDVFTPPAPSPAPSLDSDIQELSEQIHRLLLQPVHSSSPTGPCGIGPLMSPRPLHSPGSSSDSNGGDAEGPGPPAPVTFQQICKDVHLVKHQGQQLFIESRARPPPRPRLLGKAKGLPCQSLDPELEVVPMPNQAPLALALEEAERKEASSCSYQQINCLDSILRYLESCNIPSTTKRKCASSSSCTASSASDDDKQRTGPVPVGAKKDPSSTVLSGEGASPRKEPVVGGTLSPLTLANKAESVVSITSQCSFSSTIVHVGDKKPPESDIIMMEDLPGLAPGPVPSPAPSPTVAPDPAPDAYRPVGLTKAVLSLHTQKEEQAFLSRFKDLGRLRGLDSSSATPSAPGCHHGPVPPGRRHHCRSKAKRSRHHHTPRAEAPCCVSHPSPVPPSGPWPPPPSTTPFPAVVQPYPLPVFSARGGPQPLPPAPTPMPPATFPTPLVTPMVALVLPNYLFPTPPSYPYGLSQAPVEEPPSPASHSPSPSLTPLTPSPPHHPDSPLFNSRCSSPLQLNLLQLEESPRTEGGAVAGGPGSSAGPPPPTEEAAEPEARLVEVTESSNQDALSGSSDLLELLLQEDSRSGTGSAASGSLGSGLGSGSGSGSHEGGSTSASITRSSQSSHTSKYFGSIDSSEAEAGAVQARIELGDQVIKYVLQDPIWLLMANADQHVMMTYQVPSRDRASVLKQDRERLRTMQKQQPRFSEDQRRELGAVHSWVRKGQLPQALDVMACVDCSSSIQDPGHSDDPLFSELDGLGLEPMEEGGGEGGGGGGGGGEGEGGEEAQAHIGVKVSSSQDSAMDEEEQGGSSSSPALPAEENSTS.

Positions 1 to 134 are disordered; the sequence is MSGPLEGADG…SSEQSARART (134 aa). Residues 1 to 151 are interaction with BTRC; the sequence is MSGPLEGADG…LRELKLRLPP (151 aa). Low complexity-rich tracts occupy residues 48–57 and 64–115; these read NSNGSSGNES and GASQ…ASSE. Over residues 116 to 132 the composition is skewed to polar residues; that stretch reads QDNPSTSGCSSEQSARA. Phosphothreonine; by CSNK1E is present on threonine 121. Phosphoserine; by CSNK1E occurs at positions 122 and 126. The Nuclear export signal 1 motif lies at 138 to 147; sequence LMTALRELKL. PAS domains follow at residues 208-275 and 348-414; these read ITSE…PFRL and YEAP…KILQ. The PAC domain maps to 422-465; that stretch reads HSPIRFCARNGEYVTMDTSWAGFVHPWSRKVAFVLGRHKVRTAP. The Nuclear export signal 2 motif lies at 489–498; that stretch reads LSEQIHRLLL. Disordered regions lie at residues 503 to 544 and 643 to 694; these read SSSP…PAPV and TKRK…KEPV. Composition is skewed to low complexity over residues 523–533 and 648–658; these read SPGSSSDSNGG and ASSSSCTASSA. Residues 592–811 form a required for phosphorylation by CSNK1E region; the sequence is ELEVVPMPNQ…GLDSSSATPS (220 aa). A phosphoserine mark is found at serine 657, serine 659, serine 700, and serine 811. Disordered regions lie at residues 802–867 and 931–1030; these read GLDS…PPST and LSQA…DALS. Residues 820 to 836 carry the Nuclear localization signal motif; that stretch reads VPPGRRHHCRSKAKRSR. A compositionally biased stretch (basic residues) spans 823–840; the sequence is GRRHHCRSKAKRSRHHHT. Over residues 853–867 the composition is skewed to pro residues; the sequence is SPVPPSGPWPPPPST. Residues 943–954 are compositionally biased toward low complexity; that stretch reads ASHSPSPSLTPL. Residues 967-979 show a composition bias toward polar residues; the sequence is FNSRCSSPLQLNL. 2 positions are modified to phosphoserine: serine 972 and serine 973. The Nuclear export signal 3 motif lies at 975–982; that stretch reads LQLNLLQL. Residues 1036-1040 carry the LXXLL motif; the sequence is LELLL. Over residues 1045 to 1055 the composition is skewed to low complexity; that stretch reads RSGTGSAASGS. Disordered stretches follow at residues 1045 to 1091 and 1202 to 1285; these read RSGT…SKYF and IQDP…NSTS. Residues 1056-1070 are compositionally biased toward gly residues; the sequence is LGSGLGSGSGSGSHE. A compositionally biased stretch (low complexity) spans 1071–1088; sequence GGSTSASITRSSQSSHTS. The tract at residues 1142 to 1285 is CRY binding domain; sequence SRDRASVLKQ…ALPAEENSTS (144 aa). The span at 1229-1241 shows a compositional bias: gly residues; it reads GEGGGGGGGGGEG. Polar residues predominate over residues 1269-1285; the sequence is GGSSSSPALPAEENSTS.

In terms of assembly, homodimer. Component of the circadian core oscillator, which includes the CRY proteins, CLOCK or NPAS2, BMAL1 or BMAL2, CSNK1D and/or CSNK1E, TIMELESS, and the PER proteins. Interacts directly with TIMELESS, PER2, PER3, CRY1 and CRY2. Interacts with BMAL1 and CLOCK. Interacts with GPRASP1. Interacts (phosphorylated) with BTRC and FBXW11; the interactions trigger proteasomal degradation. Interacts with NONO, WDR5 and SFPQ. Interacts with USP2. Interacts with HNF4A. Post-translationally, phosphorylated on serine residues by CSNK1D, CSNK1E and probably also by CSNK1G2. Phosphorylation by CSNK1D or CSNK1E promotes nuclear location of PER proteins as well as ubiquitination and subsequent degradation. May be dephosphorylated by PP1. In terms of processing, ubiquitinated; requires phosphorylation by CSNK1E and interaction with BTRC and FBXW11. Deubiquitinated by USP2. In terms of tissue distribution, expressed in the brain, mainly in the suprachiasmatic nucleus (SCN). Expression also found in the harderian gland, lung, eye, intestine, liver and skeletal muscle.

The protein localises to the nucleus. It localises to the cytoplasm. Its function is as follows. Transcriptional repressor which forms a core component of the circadian clock. The circadian clock, an internal time-keeping system, regulates various physiological processes through the generation of approximately 24 hour circadian rhythms in gene expression, which are translated into rhythms in metabolism and behavior. It is derived from the Latin roots 'circa' (about) and 'diem' (day) and acts as an important regulator of a wide array of physiological functions including metabolism, sleep, body temperature, blood pressure, endocrine, immune, cardiovascular, and renal function. Consists of two major components: the central clock, residing in the suprachiasmatic nucleus (SCN) of the brain, and the peripheral clocks that are present in nearly every tissue and organ system. Both the central and peripheral clocks can be reset by environmental cues, also known as Zeitgebers (German for 'timegivers'). The predominant Zeitgeber for the central clock is light, which is sensed by retina and signals directly to the SCN. The central clock entrains the peripheral clocks through neuronal and hormonal signals, body temperature and feeding-related cues, aligning all clocks with the external light/dark cycle. Circadian rhythms allow an organism to achieve temporal homeostasis with its environment at the molecular level by regulating gene expression to create a peak of protein expression once every 24 hours to control when a particular physiological process is most active with respect to the solar day. Transcription and translation of core clock components (CLOCK, NPAS2, BMAL1, BMAL2, PER1, PER2, PER3, CRY1 and CRY2) plays a critical role in rhythm generation, whereas delays imposed by post-translational modifications (PTMs) are important for determining the period (tau) of the rhythms (tau refers to the period of a rhythm and is the length, in time, of one complete cycle). A diurnal rhythm is synchronized with the day/night cycle, while the ultradian and infradian rhythms have a period shorter and longer than 24 hours, respectively. Disruptions in the circadian rhythms contribute to the pathology of cardiovascular diseases, cancer, metabolic syndromes and aging. A transcription/translation feedback loop (TTFL) forms the core of the molecular circadian clock mechanism. Transcription factors, CLOCK or NPAS2 and BMAL1 or BMAL2, form the positive limb of the feedback loop, act in the form of a heterodimer and activate the transcription of core clock genes and clock-controlled genes (involved in key metabolic processes), harboring E-box elements (5'-CACGTG-3') within their promoters. The core clock genes: PER1/2/3 and CRY1/2 which are transcriptional repressors form the negative limb of the feedback loop and interact with the CLOCK|NPAS2-BMAL1|BMAL2 heterodimer inhibiting its activity and thereby negatively regulating their own expression. This heterodimer also activates nuclear receptors NR1D1/2 and RORA/B/G, which form a second feedback loop and which activate and repress BMAL1 transcription, respectively. Regulates circadian target genes expression at post-transcriptional levels, but may not be required for the repression at transcriptional level. Controls PER2 protein decay. Represses CRY2 preventing its repression on CLOCK/BMAL1 target genes such as FXYD5 and SCNN1A in kidney and PPARA in liver. Besides its involvement in the maintenance of the circadian clock, has an important function in the regulation of several processes. Participates in the repression of glucocorticoid receptor NR3C1/GR-induced transcriptional activity by reducing the association of NR3C1/GR to glucocorticoid response elements (GREs) by BMAL1:CLOCK. Plays a role in the modulation of the neuroinflammatory state via the regulation of inflammatory mediators release, such as CCL2 and IL6. In spinal astrocytes, negatively regulates the MAPK14/p38 and MAPK8/JNK MAPK cascades as well as the subsequent activation of NFkappaB. Coordinately regulates the expression of multiple genes that are involved in the regulation of renal sodium reabsorption. Can act as gene expression activator in a gene and tissue specific manner, in kidney enhances WNK1 and SLC12A3 expression in collaboration with CLOCK. Modulates hair follicle cycling. Represses the CLOCK-BMAL1 induced transcription of BHLHE40/DEC1. This chain is Period circadian protein homolog 1 (PER1), found in Spalax judaei (Judean Mountains blind mole rat).